Reading from the N-terminus, the 336-residue chain is Fructose-1,6-bisphosphatase class 1 (336 aa).

E92, D115, L117, and D118 together coordinate Mg(2+). Residues 118-121, N211, Y244, 262-264, and K274 each bind substrate; these read DGSS and YLY. E280 lines the Mg(2+) pocket.

Belongs to the FBPase class 1 family. Homotetramer. Requires Mg(2+) as cofactor.

It localises to the cytoplasm. It catalyses the reaction beta-D-fructose 1,6-bisphosphate + H2O = beta-D-fructose 6-phosphate + phosphate. It participates in carbohydrate biosynthesis; gluconeogenesis. This Vibrio atlanticus (strain LGP32) (Vibrio splendidus (strain Mel32)) protein is Fructose-1,6-bisphosphatase class 1.